Consider the following 166-residue polypeptide: Large ribosomal subunit protein uL10 (166 aa).

Belongs to the universal ribosomal protein uL10 family. Part of the ribosomal stalk of the 50S ribosomal subunit. The N-terminus interacts with L11 and the large rRNA to form the base of the stalk. The C-terminus forms an elongated spine to which L12 dimers bind in a sequential fashion forming a multimeric L10(L12)X complex.

In terms of biological role, forms part of the ribosomal stalk, playing a central role in the interaction of the ribosome with GTP-bound translation factors. This is Large ribosomal subunit protein uL10 from Mesoplasma florum (strain ATCC 33453 / NBRC 100688 / NCTC 11704 / L1) (Acholeplasma florum).